A 209-amino-acid chain; its full sequence is MIGLVGKKVGMTRIFTEDGVSIPVTVIEIEANRVTQVKSLENDGYRAVQVTTGAKKANRVTKPEAGHFAKAGVEAGRGLWEFRLPEGQEFTAGQEISVEIFADVKKVDVTGTSKGKGFAGTVKRWNFRTQDATHGNSLSHRVPGSIGQNQTPGKVFKGKKMAGHMGDERVTVQSLDVVRVDAERNLLLVKGAVPGATGGNLIVKPAVKA.

The disordered stretch occupies residues 133 to 152 (THGNSLSHRVPGSIGQNQTP). An N5-methylglutamine modification is found at Gln-150.

Belongs to the universal ribosomal protein uL3 family. As to quaternary structure, part of the 50S ribosomal subunit. Forms a cluster with proteins L14 and L19. Methylated by PrmB.

One of the primary rRNA binding proteins, it binds directly near the 3'-end of the 23S rRNA, where it nucleates assembly of the 50S subunit. This chain is Large ribosomal subunit protein uL3, found in Yersinia pseudotuberculosis serotype O:1b (strain IP 31758).